The sequence spans 277 residues: Caspase-6 (277 aa).

A propeptide spanning residues 1–5 is cleaved from the precursor; it reads MTETD. The tri-arginine exosite stretch occupies residues 25–27; sequence KRR. Residue Ser62 is modified to Phosphoserine. His104 is an active-site residue. Residues 108-125 form a 130's region region; the sequence is NHIYAYDAKIEIQTLTGL. Residue Cys146 is part of the active site. A propeptide spanning residues 163-176 is cleaved from the precursor; it reads HQTDKLDDNVTQVD. Ser240 carries the post-translational modification Phosphoserine. Residues Cys247 and Cys260 are each lipidated (S-palmitoyl cysteine).

Belongs to the peptidase C14A family. Heterotetramer that consists of two anti-parallel arranged heterodimers, each one formed by a 18 kDa (p18) and a 11 kDa (p11) subunits. Interacts with BIRC6/bruce. Interacts with RIPK3. As to quaternary structure, heterotetramer that consists of two anti-parallel arranged heterodimers, each one formed by a 18 kDa (Caspase-6 subunit p18) and a 11 kDa (Caspase-6 subunit p11) subunit. Post-translationally, phosphorylated by NUAK1; phosphorylation inhibits self-activation. Phosphorylation at Ser-240 by AMP-activated protein kinase (PRKAA1 or PRKAA2) inhibits autocleavage, preventing caspase activation, thereby preventing hepatocyte apoptosis. Palmitoylation by ZDHHC17 blocks dimerization and subsequent activation, leading to inhibit the cysteine protease activity. In terms of processing, can be cleaved and activated by different caspases, depending on the context. Cleaved and activated by caspase-8 (CASP8) and subsequently by caspase-3 (CASP3). Can also undergo autoactivation by mediating autocleavage at Asp-162 and Asp-176, while it is not able to cleave its N-terminal disordered prodomain. Cleaved and activated by CASP1, possibly in the context of inflammation.

The protein localises to the cytoplasm. It localises to the nucleus. It catalyses the reaction Strict requirement for Asp at position P1 and has a preferred cleavage sequence of Val-Glu-His-Asp-|-.. Its activity is regulated as follows. During activation, the N-terminal disordered prodomain is removed by cleavage. Concomitantly, double cleavage gives rise to a large 18-kDa and a small 11-kDa subunit. The two large and two small subunits then assemble to form the active CASP6 complex. Can be cleaved and activated by different caspases, depending on the context. Cleaved and activated by caspase-8 (CASP8) and subsequently by caspase-3 (CASP3). Can also undergo autoactivation by mediating autocleavage at Asp-162 and Asp-176, while it is not able to cleave its N-terminal disordered prodomain. Intramolecular cleavage at Asp-176 is a prerequisite for CASP6 self-activation. Cleaved and activated by CASP1 in neurons, possibly in the context of inflammation. Phosphorylation at Ser-240 inhibits autocleavage, preventing caspase activation. Cysteine protease that plays essential roles in programmed cell death, axonal degeneration, development and innate immunity. Acts as a non-canonical executioner caspase during apoptosis: localizes in the nucleus and cleaves the nuclear structural protein NUMA1 and lamin A/LMNA thereby inducing nuclear shrinkage and fragmentation. Lamin-A/LMNA cleavage is required for chromatin condensation and nuclear disassembly during apoptotic execution. Acts as a regulator of liver damage by promoting hepatocyte apoptosis: in absence of phosphorylation by AMP-activated protein kinase (AMPK), catalyzes cleavage of BID, leading to cytochrome c release, thereby participating in nonalcoholic steatohepatitis. Cleaves PARK7/DJ-1 in cells undergoing apoptosis. Involved in intrinsic apoptosis by mediating cleavage of RIPK1. Furthermore, cleaves many transcription factors such as NF-kappa-B and cAMP response element-binding protein/CREBBP. Cleaves phospholipid scramblase proteins XKR4 and XKR9. In addition to apoptosis, involved in different forms of programmed cell death. Plays an essential role in defense against viruses by acting as a central mediator of the ZBP1-mediated pyroptosis, apoptosis, and necroptosis (PANoptosis), independently of its cysteine protease activity. PANoptosis is a unique inflammatory programmed cell death, which provides a molecular scaffold that allows the interactions and activation of machinery required for inflammasome/pyroptosis, apoptosis and necroptosis. Mechanistically, interacts with RIPK3 and enhances the interaction between RIPK3 and ZBP1, leading to ZBP1-mediated inflammasome activation and cell death. Plays an essential role in axon degeneration during axon pruning which is the remodeling of axons during neurogenesis but not apoptosis. Regulates B-cell programs both during early development and after antigen stimulation. The protein is Caspase-6 of Rattus norvegicus (Rat).